The sequence spans 214 residues: Octanoyltransferase (214 aa).

The BPL/LPL catalytic domain occupies 31-206 (KDDADEIWLL…QLAEQLGYNY (176 aa)). Residues 70-77 (RGGQVTYH), 137-139 (SLG), and 150-152 (GLA) each bind substrate. Residue Cys168 is the Acyl-thioester intermediate of the active site.

This sequence belongs to the LipB family.

It is found in the cytoplasm. The catalysed reaction is octanoyl-[ACP] + L-lysyl-[protein] = N(6)-octanoyl-L-lysyl-[protein] + holo-[ACP] + H(+). It functions in the pathway protein modification; protein lipoylation via endogenous pathway; protein N(6)-(lipoyl)lysine from octanoyl-[acyl-carrier-protein]: step 1/2. Functionally, catalyzes the transfer of endogenously produced octanoic acid from octanoyl-acyl-carrier-protein onto the lipoyl domains of lipoate-dependent enzymes. Lipoyl-ACP can also act as a substrate although octanoyl-ACP is likely to be the physiological substrate. This is Octanoyltransferase from Marinomonas sp. (strain MWYL1).